Consider the following 431-residue polypeptide: Citrate synthase 1 (431 aa).

Active-site residues include H309 and D366.

It belongs to the citrate synthase family. As to quaternary structure, homohexamer.

It catalyses the reaction oxaloacetate + acetyl-CoA + H2O = citrate + CoA + H(+). It participates in carbohydrate metabolism; tricarboxylic acid cycle; isocitrate from oxaloacetate: step 1/2. This Mycobacterium tuberculosis (strain CDC 1551 / Oshkosh) protein is Citrate synthase 1 (gltA2).